The primary structure comprises 394 residues: MKRQNVRTLALIVCTFTYLLVGAAVFDALESEPELIERQRLELRQQELRARYNLSQGGYEELERVVLRLKPHKAGVQWRFAGSFYFAITVITTIGYGHAAPSTDGGKVFCMFYALLGIPLTLVMFQSLGERINTLVRYLLHRAKKGLGMRRADVSMANMVLIGFFSCISTLCIGAAAFSHYEHWTFFQAYYYCFITLTTIGFGDYVALQKDQALQTQPQYVAFSFVYILTGLTVIGAFLNLVVLRFMTMNAEDEKRDAEHRALLTRNGQAGGGGGGGSAHTTDTASSTAAAGGGGFRNVYAEVLHFQSMCSCLWYKSREKLQYSIPMIIPRDLSTSDTCVEQSHSSPGGGGRYSDTPSRRCLCSGAPRSAISSVSTGLHSLSTFRGLMKRRSSV.

The Cytoplasmic segment spans residues 1–8 (MKRQNVRT). The chain crosses the membrane as a helical span at residues 9–29 (LALIVCTFTYLLVGAAVFDAL). The N-linked (GlcNAc...) asparagine glycan is linked to Asn-53. An intramembrane region (pore-forming) is located at residues 78–101 (WRFAGSFYFAITVITTIGYGHAAP). Residues Thr-93, Ile-94, Gly-95, and Tyr-96 each coordinate K(+). The segment at 93 to 98 (TIGYGH) is selectivity filter 1. The chain crosses the membrane as a helical span at residues 108–128 (VFCMFYALLGIPLTLVMFQSL). Residues 129–158 (GERINTLVRYLLHRAKKGLGMRRADVSMAN) are Cytoplasmic-facing. The chain crosses the membrane as a helical span at residues 159-179 (MVLIGFFSCISTLCIGAAAFS). Positions 184–207 (WTFFQAYYYCFITLTTIGFGDYVA) form an intramembrane region, pore-forming. Residues Thr-199, Ile-200, Gly-201, and Phe-202 each contribute to the K(+) site. The tract at residues 199–204 (TIGFGD) is selectivity filter 2. Residues 223–243 (FSFVYILTGLTVIGAFLNLVV) traverse the membrane as a helical segment. An X-gate region spans residues 243–248 (VLRFMT). The Cytoplasmic portion of the chain corresponds to 244–394 (LRFMTMNAED…RGLMKRRSSV (151 aa)). 2 disordered regions span residues 266-286 (RNGQ…DTAS) and 338-357 (TCVE…SDTP). The span at 269–278 (QAGGGGGGGS) shows a compositional bias: gly residues.

The protein belongs to the two pore domain potassium channel (TC 1.A.1.8) family. Homodimer. Heterodimer with KCNK1. Heterodimer with KCNK9. Widespread expression in adult. Strongest expression in pancreas and placenta. Lower expression in brain, lung, prostate, heart, kidney, uterus, small intestine and colon.

It is found in the cell membrane. It carries out the reaction K(+)(in) = K(+)(out). It catalyses the reaction Na(+)(in) = Na(+)(out). With respect to regulation, inhibited by external acidification, diacylglycerol and anandamide. Activated by halothane and isoflurane. In terms of biological role, k(+) channel that conducts voltage-dependent outward rectifying currents upon membrane depolarization. Voltage sensing is coupled to K(+) electrochemical gradient in an 'ion flux gating' mode where outward but not inward ion flow opens the gate. Changes ion selectivity and becomes permeable to Na(+) ions in response to extracellular acidification. Protonation of the pH sensor His-98 stabilizes C-type inactivation conformation likely converting the channel from outward K(+)-conducting, to inward Na(+)-conducting to nonconductive state. Homo- and heterodimerizes to form functional channels with distinct regulatory and gating properties. Allows K(+) currents with fast-gating kinetics important for the repolarization and hyperpolarization phases of action potentials. In cerebellar granule cells, heteromeric KCNK3:KCNK9 channel may hyperpolarize the resting membrane potential to limit intrinsic neuronal excitability, but once the action potential threshold is reached, it may support high-frequency action potential firing and increased neuronal excitability. Dispensable for central chemosensory respiration i.e. breathing controlled by brainstem CO2/pH, it rather conducts pH-sensitive currents and controls the firing rate of serotonergic raphe neurons involved in potentiation of the respiratory chemoreflex. Additionally, imparts chemosensitivity to type 1 cells in carotid bodies which respond to a decrease in arterial oxygen pressure or an increase in carbon dioxide pressure or pH to initiate adaptive changes in pulmonary ventilation. In adrenal gland, contributes to the maintenance of a hyperpolarized resting membrane potential of aldosterone-producing cells at zona glomerulosa and limits aldosterone release as part of a regulatory mechanism that controls arterial blood pressure and electrolyte homeostasis. In brown adipocytes, mediates K(+) efflux that counteracts norepinephrine-induced membrane depolarization, limits Ca(2+) efflux and downstream cAMP and PKA signaling, ultimately attenuating lipid oxidation and adaptive thermogenesis. The chain is Potassium channel subfamily K member 3 from Homo sapiens (Human).